Consider the following 322-residue polypeptide: 4-diphosphocytidyl-2-C-methyl-D-erythritol kinase (322 aa).

Lysine 27 is a catalytic residue. 112–122 lines the ATP pocket; it reads PVAGGMAGGSA. Aspartate 154 is an active-site residue.

Belongs to the GHMP kinase family. IspE subfamily.

It carries out the reaction 4-CDP-2-C-methyl-D-erythritol + ATP = 4-CDP-2-C-methyl-D-erythritol 2-phosphate + ADP + H(+). It participates in isoprenoid biosynthesis; isopentenyl diphosphate biosynthesis via DXP pathway; isopentenyl diphosphate from 1-deoxy-D-xylulose 5-phosphate: step 3/6. Functionally, catalyzes the phosphorylation of the position 2 hydroxy group of 4-diphosphocytidyl-2C-methyl-D-erythritol. The polypeptide is 4-diphosphocytidyl-2-C-methyl-D-erythritol kinase (Mycolicibacterium smegmatis (strain ATCC 700084 / mc(2)155) (Mycobacterium smegmatis)).